The primary structure comprises 212 residues: ATP-dependent dethiobiotin synthetase BioD (212 aa).

13–18 (GIGKTV) serves as a coordination point for ATP. Threonine 17 is a Mg(2+) binding site. Residue lysine 33 is part of the active site. Glutamate 100 lines the Mg(2+) pocket. ATP contacts are provided by residues 100-103 (EGAG) and 184-186 (PHV).

The protein belongs to the dethiobiotin synthetase family. In terms of assembly, homodimer. It depends on Mg(2+) as a cofactor.

It is found in the cytoplasm. The enzyme catalyses (7R,8S)-7,8-diammoniononanoate + CO2 + ATP = (4R,5S)-dethiobiotin + ADP + phosphate + 3 H(+). It participates in cofactor biosynthesis; biotin biosynthesis; biotin from 7,8-diaminononanoate: step 1/2. Catalyzes a mechanistically unusual reaction, the ATP-dependent insertion of CO2 between the N7 and N8 nitrogen atoms of 7,8-diaminopelargonic acid (DAPA, also called 7,8-diammoniononanoate) to form a ureido ring. The chain is ATP-dependent dethiobiotin synthetase BioD from Nitrobacter hamburgensis (strain DSM 10229 / NCIMB 13809 / X14).